Here is a 411-residue protein sequence, read N- to C-terminus: Exodeoxyribonuclease 7 large subunit (411 aa).

Belongs to the XseA family. In terms of assembly, heterooligomer composed of large and small subunits.

It is found in the cytoplasm. The enzyme catalyses Exonucleolytic cleavage in either 5'- to 3'- or 3'- to 5'-direction to yield nucleoside 5'-phosphates.. In terms of biological role, bidirectionally degrades single-stranded DNA into large acid-insoluble oligonucleotides, which are then degraded further into small acid-soluble oligonucleotides. The protein is Exodeoxyribonuclease 7 large subunit of Mycobacterium sp. (strain JLS).